The sequence spans 460 residues: Argininosuccinate lyase (460 aa).

The protein belongs to the lyase 1 family. Argininosuccinate lyase subfamily.

Its subcellular location is the cytoplasm. The enzyme catalyses 2-(N(omega)-L-arginino)succinate = fumarate + L-arginine. Its pathway is amino-acid biosynthesis; L-arginine biosynthesis; L-arginine from L-ornithine and carbamoyl phosphate: step 3/3. The protein is Argininosuccinate lyase of Lacticaseibacillus paracasei (strain ATCC 334 / BCRC 17002 / CCUG 31169 / CIP 107868 / KCTC 3260 / NRRL B-441) (Lactobacillus paracasei).